The following is a 509-amino-acid chain: Dol-P-Glc:Glc(2)Man(9)GlcNAc(2)-PP-Dol alpha-1,2-glucosyltransferase (509 aa).

Residues 1–4 lie on the Cytoplasmic side of the membrane; it reads MGKL. Residues 5–25 form a helical membrane-spanning segment; the sequence is AVAAITSLWVIPMSIIVNHIV. The Lumenal portion of the chain corresponds to 26 to 57; it reads PEPYMDEIFHVPQAQQYCNGNFRSWDPMITTP. A helical transmembrane segment spans residues 58–78; that stretch reads PGLYYLSLAHVASLFPGMLLM. The Cytoplasmic segment spans residues 79–99; it reads ENTSQSFSEACSTSVLRSTNA. Residues 100–120 form a helical membrane-spanning segment; it reads VSAVLCGVLVYEIIRFLGPNL. Topologically, residues 121 to 124 are lumenal; that stretch reads SDRK. Residues 125–145 traverse the membrane as a helical segment; the sequence is ATFMALVMSLYPLHWFFTFLY. Residues 146–170 lie on the Cytoplasmic side of the membrane; sequence YTDVASLTAVLAMYLTCLKRRYVLS. A helical membrane pass occupies residues 171-191; it reads ALFGTLAVFIRQTNVVWMLFV. At 192–285 the chain is on the lumenal side; it reads ACSGILDFTL…KWRILIKFSP (94 aa). The segment at 210-254 is disordered; that stretch reads QEVNQELHQSSNKKGATLRSNLRKRKSDISSDTSDPFNHGQTVPS. 2 stretches are compositionally biased toward polar residues: residues 215-229 and 239-254; these read ELHQSSNKKGATLRS and SSDTSDPFNHGQTVPS. Residues 286–306 form a helical membrane-spanning segment; sequence FIFVVVAFGIFILWNGGIVLG. Residues 307–311 are Cytoplasmic-facing; the sequence is AKEAH. A helical transmembrane segment spans residues 312–332; sequence VVSLHFAQIMYFSLVSALFTA. Over 333–355 the chain is Lumenal; it reads PLHFSVNQLRHQFHQLHRNWSLS. A glycan (N-linked (GlcNAc...) asparagine) is linked at asparagine 351. The chain crosses the membrane as a helical span at residues 356-376; it reads LILTLVALVAGFVSVHFFSLA. Residues 377 to 400 lie on the Cytoplasmic side of the membrane; it reads HPYLLADNRHYPFYLWRKIINAHW. Residues 401–421 form a helical membrane-spanning segment; it reads LMKYILVPVYVYSWFSILTLL. Residues 422–428 lie on the Lumenal side of the membrane; that stretch reads AKTRRQT. Residues 429–449 traverse the membrane as a helical segment; that stretch reads WILVYFLATCGVLVPTPLIEF. Topologically, residues 450–472 are cytoplasmic; it reads RYYTIPFYLFMLHSCVRSSSFAT. Residues 473 to 493 form a helical membrane-spanning segment; sequence WLLIGTIFVSINVFTMAMFLF. Topologically, residues 494-509 are lumenal; that stretch reads RPFKWSHEDGVQRFIW.

It belongs to the ALG10 glucosyltransferase family.

The protein localises to the endoplasmic reticulum membrane. The enzyme catalyses an alpha-D-Glc-(1-&gt;3)-alpha-D-Glc-(1-&gt;3)-alpha-D-Man-(1-&gt;2)-alpha-D-Man-(1-&gt;2)-alpha-D-Man-(1-&gt;3)-[alpha-D-Man-(1-&gt;2)-alpha-D-Man-(1-&gt;3)-[alpha-D-Man-(1-&gt;2)-alpha-D-Man-(1-&gt;6)]-alpha-D-Man-(1-&gt;6)]-beta-D-Man-(1-&gt;4)-beta-D-GlcNAc-(1-&gt;4)-alpha-D-GlcNAc-diphospho-di-trans,poly-cis-dolichol + a di-trans,poly-cis-dolichyl beta-D-glucosyl phosphate = a alpha-D-Glc-(1-&gt;2)-alpha-D-Glc-(1-&gt;3)-alpha-D-Glc-(1-&gt;3)-alpha-D-Man-(1-&gt;2)-alpha-D-Man-(1-&gt;2)-alpha-D-Man-(1-&gt;3)-[alpha-D-Man-(1-&gt;2)-alpha-D-Man-(1-&gt;3)-[alpha-D-Man-(1-&gt;2)-alpha-D-Man-(1-&gt;6)]-alpha-D-Man-(1-&gt;6)]-beta-D-Man-(1-&gt;4)-beta-D-GlcNAc-(1-&gt;4)-alpha-D-GlcNAc-diphospho-di-trans,poly-cis-dolichol + a di-trans,poly-cis-dolichyl phosphate + H(+). It participates in protein modification; protein glycosylation. Its function is as follows. Dol-P-Glc:Glc(2)Man(9)GlcNAc(2)-PP-Dol alpha-1,2-glucosyltransferase that operates in the biosynthetic pathway of dolichol-linked oligosaccharides, the glycan precursors employed in protein asparagine (N)-glycosylation. The assembly of dolichol-linked oligosaccharides begins on the cytosolic side of the endoplasmic reticulum membrane and finishes in its lumen. The sequential addition of sugars to dolichol pyrophosphate produces dolichol-linked oligosaccharides containing fourteen sugars, including two GlcNAcs, nine mannoses and three glucoses. Once assembled, the oligosaccharide is transferred from the lipid to nascent proteins by oligosaccharyltransferases. In the lumen of the endoplasmic reticulum, adds the third and last glucose residue from dolichyl phosphate glucose (Dol-P-Glc) onto the lipid-linked oligosaccharide intermediate Glc(2)Man(9)GlcNAc(2)-PP-Dol to produce Glc(3)Man(9)GlcNAc(2)-PP-Dol. This is Dol-P-Glc:Glc(2)Man(9)GlcNAc(2)-PP-Dol alpha-1,2-glucosyltransferase from Arabidopsis thaliana (Mouse-ear cress).